We begin with the raw amino-acid sequence, 274 residues long: 4-diphosphocytidyl-2-C-methyl-D-erythritol kinase (274 aa).

Lys-8 is an active-site residue. Residue 92-102 (PSGAGLGGGSS) participates in ATP binding. Residue Asp-134 is part of the active site.

Belongs to the GHMP kinase family. IspE subfamily.

It carries out the reaction 4-CDP-2-C-methyl-D-erythritol + ATP = 4-CDP-2-C-methyl-D-erythritol 2-phosphate + ADP + H(+). The protein operates within isoprenoid biosynthesis; isopentenyl diphosphate biosynthesis via DXP pathway; isopentenyl diphosphate from 1-deoxy-D-xylulose 5-phosphate: step 3/6. Its function is as follows. Catalyzes the phosphorylation of the position 2 hydroxy group of 4-diphosphocytidyl-2C-methyl-D-erythritol. In Porphyromonas gingivalis (strain ATCC 33277 / DSM 20709 / CIP 103683 / JCM 12257 / NCTC 11834 / 2561), this protein is 4-diphosphocytidyl-2-C-methyl-D-erythritol kinase.